Reading from the N-terminus, the 439-residue chain is MSLANVVVIGAQWGDEGKGKITDLLSRSADVVVRYQGGVNAGHTIVVDGRVLKLHLIPSGILYPDTICLIGPGTVVDPKVMLGELDMLLANDIDISGLRLASSAHVTMPYHRLLDLAMEKQRGDRRIGTTGRGIGPTYADKSQRSGIRVIDLLDEQRLRNRLEGPLTEKNELLEKIYGIEPLDGEAVIQEYLGYGQRLSKHVVDCTRAIHSAAKARKNILFEGAQGTLLDLDHGTYPYVTSSNPVSGGACIGAGVGPTLIDRVIGVAKAYTTRVGEGPFPTELSGSLNDQLTERGGEFGTTTGRRRRCGWFDGVIGRYAVQVNGLDCLAITKLDVLDEMDEIQVCVAYELDGERIEYFPSSSDDFARCKPIFETMKGWQCSTEECRKLEDLPKAAMDYLRFLADLMEVPIAIVSLGASRDQTIVVEDPIHGPKRALLSA.

GTP contacts are provided by residues 14–20 (GDEGKGK) and 42–44 (GHT). Residue aspartate 15 is the Proton acceptor of the active site. 2 residues coordinate Mg(2+): aspartate 15 and glycine 42. IMP-binding positions include 15–18 (DEGK), 40–43 (NAGH), threonine 130, arginine 144, glutamine 225, threonine 240, and arginine 304. Catalysis depends on histidine 43, which acts as the Proton donor. Residue 300–306 (TTTGRRR) participates in substrate binding. Residues arginine 306, 332–334 (KLD), and 414–416 (SLG) contribute to the GTP site.

The protein belongs to the adenylosuccinate synthetase family. In terms of assembly, homodimer. Mg(2+) is required as a cofactor.

It is found in the cytoplasm. It carries out the reaction IMP + L-aspartate + GTP = N(6)-(1,2-dicarboxyethyl)-AMP + GDP + phosphate + 2 H(+). Its pathway is purine metabolism; AMP biosynthesis via de novo pathway; AMP from IMP: step 1/2. Its function is as follows. Plays an important role in the de novo pathway of purine nucleotide biosynthesis. Catalyzes the first committed step in the biosynthesis of AMP from IMP. The protein is Adenylosuccinate synthetase of Synechococcus sp. (strain CC9902).